The sequence spans 143 residues: Large ribosomal subunit protein uL11 (143 aa).

This sequence belongs to the universal ribosomal protein uL11 family. As to quaternary structure, part of the ribosomal stalk of the 50S ribosomal subunit. Interacts with L10 and the large rRNA to form the base of the stalk. L10 forms an elongated spine to which L12 dimers bind in a sequential fashion forming a multimeric L10(L12)X complex. One or more lysine residues are methylated.

Its function is as follows. Forms part of the ribosomal stalk which helps the ribosome interact with GTP-bound translation factors. The chain is Large ribosomal subunit protein uL11 from Delftia acidovorans (strain DSM 14801 / SPH-1).